Here is a 346-residue protein sequence, read N- to C-terminus: Archaeosine synthase subunit beta (346 aa).

In terms of domain architecture, Radical SAM core spans Gly36 to Glu276. The [4Fe-4S] cluster site is built by Cys51, Cys59, and Cys62.

This sequence belongs to the radical SAM superfamily. RaSEA family. In terms of assembly, forms a robust complex with the archaeosine synthase alpha subunit ArcS. This complex likely consists of an alpha(2)beta(2) heterotetrameric structure. Requires [4Fe-4S] cluster as cofactor.

It carries out the reaction 7-N-[(5S)-5-amino-5-carboxypentyl]formamidino-7-deazaguanosine(15) in tRNA + S-adenosyl-L-methionine = archaeosine(15) in tRNA + L-1-piperideine-6-carboxylate + 5'-deoxyadenosine + L-methionine + 2 H(+). It functions in the pathway tRNA modification; archaeosine-tRNA biosynthesis. Functionally, radical SAM enzyme involved in the synthesis of archaeosine, a modified nucleoside present in the dihydrouridine loop (D-loop) of archaeal tRNAs. Catalyzes the cleavage of the C(epsilon)-N bond of the lysine moiety of q0kN15-tRNA, leading to the formation of archaeosine at position 15 in tRNAs. This chain is Archaeosine synthase subunit beta, found in Methanosarcina acetivorans (strain ATCC 35395 / DSM 2834 / JCM 12185 / C2A).